The following is a 554-amino-acid chain: Chaperonin GroEL (554 aa).

ATP contacts are provided by residues 30–33, lysine 51, 87–91, glycine 416, and aspartate 503; these read TLGP and DGTTT.

This sequence belongs to the chaperonin (HSP60) family. Forms a cylinder of 14 subunits composed of two heptameric rings stacked back-to-back. Interacts with the co-chaperonin GroES.

The protein resides in the cytoplasm. It catalyses the reaction ATP + H2O + a folded polypeptide = ADP + phosphate + an unfolded polypeptide.. Its function is as follows. Together with its co-chaperonin GroES, plays an essential role in assisting protein folding. The GroEL-GroES system forms a nano-cage that allows encapsulation of the non-native substrate proteins and provides a physical environment optimized to promote and accelerate protein folding. The sequence is that of Chaperonin GroEL from Holospora obtusa.